Reading from the N-terminus, the 601-residue chain is MPSSLFADLERNGSGGGGGGGGGGGGGGSGGGETLDDQRALQLALDQLSLLGLDSDEGASLYDSEPRKKSVNMTECVPVPSSEHVAEIVGRQGGSGRDGDRRGFSISPTPSLEPWLPGCKIKALRAKTNTYIKTPVRGEEPVFVVTGRKEDVAMARREIISAAEHFSMIRASRNKNTALNGAVPGPPNLPGQTTIQVRVPYRVVGLVVGPKGATIKRIQQQTHTYIVTPSRDKEPVFEVTGMPENVDRAREEIEAHIALRTGGIIELTDENDFHANGTDVGFDLHHGSGGSGPGSLWSKPTPSITPTPGRKPFSSYRNDSSSSLGSASTDSYFGGGTSGSAAATSRLADYSPPSPALSFAHNGNNNNNGNGYTYTAGEASVPSPDGGPELQPTFDPAPAPPPGTPLLWAQFERSPGGGSAAPVSSSCSSSASSSASSSSVVFPGGGASSTPSNANLGLLVHRRLHPGTSCPRLSPPLHMATGAGEHHLARRVRSDPGGGGLAYAAYANGLGTQLPGLPSSDTSGSSSSSSSSSSSSSSSSGLRRKGSRDCSVCFESEVIAALVPCGHNLFCMECANRICEKSEPECPVCHTAVTQAIRIFS.

Disordered stretches follow at residues 1 to 39 (MPSS…DDQR) and 90 to 109 (GRQG…ISPT). At Ser-4 the chain carries Phosphoserine. The span at 13 to 33 (GSGGGGGGGGGGGGGGSGGGE) shows a compositional bias: gly residues. KH domains follow at residues 98-159 (DGDR…RREI) and 192-253 (QTTI…REEI). 2 disordered regions span residues 284–332 (LHHG…TDSY) and 344–448 (TSRL…GGAS). The residue at position 320 (Ser-320) is a Phosphoserine. Low complexity-rich tracts occupy residues 320-331 (SSSSLGSASTDS) and 362-371 (NGNNNNNGNG). The segment covering 395–404 (DPAPAPPPGT) has biased composition (pro residues). Residues 420–442 (AAPVSSSCSSSASSSASSSSVVF) show a composition bias toward low complexity. Ser-494 bears the Phosphoserine mark. The tract at residues 514 to 546 (LPGLPSSDTSGSSSSSSSSSSSSSSSSGLRRKG) is disordered. Over residues 519 to 540 (SSDTSGSSSSSSSSSSSSSSSS) the composition is skewed to low complexity. An RING-type zinc finger spans residues 550 to 590 (CSVCFESEVIAALVPCGHNLFCMECANRICEKSEPECPVCH).

Phosphorylation at Ser-494 creates a docking site for 14-3-3, which stabilizes the protein and modulates its ability to bind RNA.

The protein localises to the cytoplasm. Its subcellular location is the nucleus. The protein resides in the P-body. It localises to the cytoplasmic granule. Functionally, RNA-binding protein. May be involved in post-transcriptional regulatory mechanisms. The chain is RNA-binding protein MEX3B (Mex3b) from Mus musculus (Mouse).